The sequence spans 442 residues: DNA N(6)-methyladenine demethylase ALKBH1D (442 aa).

A compositionally biased stretch (polar residues) spans 135-144 (SMVHFDSTNP). A disordered region spans residues 135–185 (SMVHFDSTNPSSSSKSSQSQNLKIRKVRNHRNSGFKSRDQSPQRIKDPPPF). Residues 145–154 (SSSSKSSQSQ) show a composition bias toward low complexity. Over residues 157-167 (KIRKVRNHRNS) the composition is skewed to basic residues. Residues 170–183 (KSRDQSPQRIKDPP) show a composition bias toward basic and acidic residues. A Fe2OG dioxygenase domain is found at 332 to 442 (SPDICIVNFY…GRLNLTFRHF (111 aa)). 339–341 (NFY) contributes to the 2-oxoglutarate binding site. Residues H350, D352, and H410 each coordinate Fe cation. Residue 434–440 (RLNLTFR) participates in 2-oxoglutarate binding.

Belongs to the alkB family. It depends on Fe(2+) as a cofactor. As to expression, expressed at low levels in roots, seedlings and rosette leaves, but barely in cauline leaves, stems, siliques and flowers.

The protein resides in the nucleus. It is found in the cytoplasm. The enzyme catalyses an N(6)-methyl-2'-deoxyadenosine in DNA + 2-oxoglutarate + O2 = a 2'-deoxyadenosine in DNA + formaldehyde + succinate + CO2. Functionally, dioxygenase that catalyzes DNA N(6)-methyladenine (6 mA) demethylation to modulate gene expression and regulate seed germination. The sequence is that of DNA N(6)-methyladenine demethylase ALKBH1D from Arabidopsis thaliana (Mouse-ear cress).